A 693-amino-acid chain; its full sequence is Glycine--tRNA ligase beta subunit (693 aa).

This sequence belongs to the class-II aminoacyl-tRNA synthetase family. In terms of assembly, tetramer of two alpha and two beta subunits.

It is found in the cytoplasm. The enzyme catalyses tRNA(Gly) + glycine + ATP = glycyl-tRNA(Gly) + AMP + diphosphate. In Ligilactobacillus salivarius (strain UCC118) (Lactobacillus salivarius), this protein is Glycine--tRNA ligase beta subunit.